The primary structure comprises 621 residues: Chaperone protein HtpG (621 aa).

The a; substrate-binding stretch occupies residues 1–341; the sequence is MSNQEYTFQT…SEDLPLNVSR (341 aa). The b stretch occupies residues 342–547; the sequence is EILQQNKILA…GDEQNAMMAN (206 aa). The c stretch occupies residues 548–621; sequence LMRQMGQNMP…RLNSVLLKAL (74 aa).

It belongs to the heat shock protein 90 family. In terms of assembly, homodimer.

The protein resides in the cytoplasm. Functionally, molecular chaperone. Has ATPase activity. In Helicobacter acinonychis (strain Sheeba), this protein is Chaperone protein HtpG.